A 1431-amino-acid polypeptide reads, in one-letter code: Trophinin (1431 aa).

Disordered regions lie at residues 1 to 24 (MDRRNDYGYRVPLFQGPLPPPGSL), 341 to 365 (SRARKAATKARATESQTPNADQGAQ), and 401 to 433 (PTTRTRGKRNRKSKHLNGDERSGSNYRRIPWGR). A compositionally biased stretch (basic residues) spans 405 to 415 (TRGKRNRKSKH). One can recognise an MAGE domain in the interval 444-642 (LQERANKLVK…KDWAVQYREA (199 aa)). Repeat copies occupy residues 751–760 (FSGGPGITFG) and 769–778 (FSNTASISFG). Residues 751 to 1430 (FSGGPGITFG…ASLGACGFSY (680 aa)) form a 62 X 10 AA approximate tandem repeats region. One copy of the 3; approximate repeat lies at 779–786 (GTLSTSSS). Tandem repeats lie at residues 787 to 796 (FSSAASISFG) and 805 to 814 (FSSEASISFG). Residues 823–833 (FSGGVSSSFSG) form a 6; approximate repeat. Repeat unit 7 spans residues 841–850 (FSGGASSGFG). An 8; approximate repeat occupies 859 to 870 (FSGVLSTSTSFG). The 9; approximate repeat unit spans residues 879–890 (FSSALSTSTGFG). Repeat copies occupy residues 901 to 910 (GSPSSSGSFG), 911 to 920 (GTLSTSICFG), 921 to 930 (GSPCTSTGFG), 931 to 940 (GTLSTSVSFG), and 941 to 950 (GSSSTSANFG). Residues 951–960 (GTLSTSICFD) form a 15; approximate repeat. Repeat copies occupy residues 961 to 970 (GSPSTGAGFG), 971 to 980 (GALNTSASFG), 981 to 990 (SVLNTSTGFG), 991 to 1000 (GAMSTSADFG), 1001 to 1010 (GTLSTSVCFG), and 1011 to 1020 (GSPGTSVSFG). One copy of the 22; approximate repeat lies at 1021–1030 (SALNTNAGYG). 4 tandem repeats follow at residues 1031-1040 (GAVSTNTDFG), 1041-1050 (GTLSTSVCFG), 1051-1060 (GSPSTSAGFG), and 1061-1070 (GALNTNASFG). The stretch at 1071-1080 (CAVSTSASFS) is one 27; approximate repeat. Residues 1081–1090 (GAVSTSACFS) form a 28; approximate repeat. Repeat copies occupy residues 1091 to 1100 (GAPITNPGFG), 1101 to 1110 (GAFSTSAGFG), 1111 to 1120 (GALSTAADFG), 1121 to 1130 (GTPSNSIGFG), 1131 to 1140 (AAPSTSVSFG), 1141 to 1150 (GAHGTSLCFG), 1151 to 1160 (GAPSTSLCFG), and 1161 to 1170 (SASNTNLCFG). The 37; approximate repeat unit spans residues 1171–1180 (GPPSTSACFS). One copy of the 38; approximate repeat lies at 1181–1190 (GATSPSFCDG). Tandem repeats lie at residues 1191–1200 (PSTSTGFSFG), 1201–1210 (NGLSTNAGFG), and 1211–1220 (GGLNTSAGFG). The stretch at 1221–1230 (GGLGTSAGFS) is one 42; approximate repeat. The 43; approximate repeat unit spans residues 1231 to 1240 (GGLSTSSGFD). A run of 2 repeats spans residues 1241–1250 (GGLGTSAGFG) and 1251–1260 (GGPGTSTGFG). One copy of the 46; approximate repeat lies at 1261–1270 (GGLGTSAGFS). A run of 3 repeats spans residues 1271 to 1280 (GGLGTSAGFG), 1281 to 1290 (GGLVTSDGFG), and 1291 to 1300 (GGLGTNASFG). A 50; approximate repeat occupies 1301–1310 (STLGTSAGFS). Repeat unit 51 spans residues 1311–1320 (GGLSTSDGFG). Residues 1321–1330 (SRPNASFDRG) form a 52; approximate repeat. A 53; approximate repeat occupies 1331 to 1340 (LSTIIGFGSG). One copy of the 54; approximate repeat lies at 1341 to 1350 (SNTSTGFTGE). A compositionally biased stretch (low complexity) spans 1342 to 1363 (NTSTGFTGEPSTSTGFSSGPSS). A disordered region spans residues 1342–1365 (NTSTGFTGEPSTSTGFSSGPSSIV). A 55; approximate repeat occupies 1351 to 1360 (PSTSTGFSSG). Residues 1361–1370 (PSSIVGFSGG) form a 56; approximate repeat. One copy of the 57; approximate repeat lies at 1371 to 1380 (PSTGVGFCSG). Residues 1381–1390 (PSTSGFSGGP) form a 58; approximate repeat. One copy of the 59; approximate repeat lies at 1391-1400 (STGAGFGGGP). The 60; approximate repeat unit spans residues 1401-1410 (NTGAGFGGGP). Residues 1411–1420 (STSAGFGSGA) form a 61; approximate repeat. The 62; approximate repeat unit spans residues 1421–1430 (ASLGACGFSY).

In terms of assembly, directly binds bystin, and indirectly tastin. In terms of tissue distribution, strong expression at implantation sites. Found in the placenta from the sixth week of pregnancy. Was localized in the cytoplasm of the syncytiotrophoblast in the chorionic villi and in endometrial decidual cells at the uteroplacental interface. After week 10, the level decreased and then disappeared from placental villi. Also found in macrophages.

Its function is as follows. Could be involved with bystin and tastin in a cell adhesion molecule complex that mediates an initial attachment of the blastocyst to uterine epithelial cells at the time of the embryo implantation. Directly responsible for homophilic cell adhesion. This Homo sapiens (Human) protein is Trophinin (TRO).